We begin with the raw amino-acid sequence, 350 residues long: uncharacterized protein (350 aa).

The next 3 membrane-spanning stretches (helical) occupy residues 10 to 30 (YSFI…EVIG), 51 to 71 (FAGI…VTLT), and 327 to 347 (ILSL…LKLF).

The protein belongs to the 1-acyl-sn-glycerol-3-phosphate acyltransferase family.

It is found in the endoplasmic reticulum membrane. This is an uncharacterized protein from Schizosaccharomyces pombe (strain 972 / ATCC 24843) (Fission yeast).